We begin with the raw amino-acid sequence, 772 residues long: Transcription factor sdnS (772 aa).

A DNA-binding region (zn(2)-C6 fungal-type) is located at residues 23-53; it reads CWECRRRKIRCQFGAGNDTVCLPCQARGSTC. 2 disordered regions span residues 94-121 and 156-180; these read EAGG…SAQN and ASML…NSKT. The segment covering 100 to 121 has biased composition (polar residues); the sequence is ANRSTTQSNRGSRSPSPDSAQN.

The protein resides in the nucleus. The protein operates within antibiotic biosynthesis. In terms of biological role, transcription factor; part of the gene cluster that mediates the biosynthesis of sordarin and hypoxysordarin, glycoside antibiotics with a unique tetracyclic diterpene aglycone structure. First, the geranylgeranyl diphosphate synthase sdnC constructs GGDP from farnesyl diphosphate and isopentenyl diphosphate. The diterpene cyclase sdnA then catalyzes the cyclization of GGDP to afford cycloaraneosene. Cycloaraneosene is then hydroxylated four times by the putative cytochrome P450 monooxygenases sdnB, sdnE, sdnF and sdnH to give a hydroxylated cycloaraneosene derivative such as cycloaraneosene-8,9,13,19-tetraol. Although the order of the hydroxylations is unclear, at least C8, C9 and C13 of the cycloaraneosene skeleton are hydroxylated before the sordaricin formation. Dehydration of the 13-hydroxy group of the hydroxylated cycloaraneosene derivative might be catalyzed by an unassigned hypothetical protein such as sdnG and sdnP to construct the cyclopentadiene moiety. The FAD-dependent oxidoreductase sdnN is proposed to catalyze the oxidation at C9 of the hydroxylated cycloaraneosene derivative and also catalyze the Baeyer-Villiger oxidation to give the lactone intermediate. The presumed lactone intermediate would be hydrolyzed to give an acrolein moiety and a carboxylate moiety. Then, [4+2]cycloaddition would occur between the acrolein moiety and the cyclopentadiene moiety to give sordaricin. SdnN might also be involved in the [4+2]cycloaddition after the hypothesized oxidation to accommodate the oxidized product and prompt the [4+2]cycloaddition. GDP-6-deoxy-D-altrose may be biosynthesized from GDP-D-mannose by the putative GDP-mannose-4,6-dehydratase sdnI and the short-chain dehydrogenase sdnK. The glycosyltransferase sdnJ catalyzes the attachment of 6-deoxy-D-altrose onto the 19-hydroxy group of sordaricin to give 4'-O-demethylsordarin. The methyltransferase sdnD would complete the biosynthesis of sordarin. Sordarin can be further modified into hypoxysordarin. The unique acyl chain at the 3'-hydroxy group of hypoxysordarin would be constructed by an iterative type I PKS sdnO and the trans-acting polyketide methyltransferase sdnL. SdnL would be responsible for the introduction of an alpha-methyl group of the polyketide chain. Alternatively, the beta-lactamase-like protein sdnR might be responsible for the cleavage and transfer of the polyketide chain from the PKS sdnO to sordarin. Two putative cytochrome P450 monooxygenases, sdnQ and sdnT, might catalyze the epoxidations of the polyketide chain to complete the biosynthesis of hypoxysordarin. Transcriptional regulators sdnM and sdnS are presumably encoded for the transcriptional regulation of the expression of the sdn gene cluster. This chain is Transcription factor sdnS, found in Sordaria araneosa (Pleurage araneosa).